The sequence spans 342 residues: L-threonine 3-dehydrogenase (342 aa).

C38 contacts Zn(2+). Catalysis depends on charge relay system residues T40 and H43. Positions 63, 64, 93, 96, 99, and 107 each coordinate Zn(2+). NAD(+) is bound by residues I175, D195, R200, 262-264 (LGI), and 286-287 (IY).

It belongs to the zinc-containing alcohol dehydrogenase family. In terms of assembly, homotetramer. The cofactor is Zn(2+).

It is found in the cytoplasm. The enzyme catalyses L-threonine + NAD(+) = (2S)-2-amino-3-oxobutanoate + NADH + H(+). It participates in amino-acid degradation; L-threonine degradation via oxydo-reductase pathway; glycine from L-threonine: step 1/2. Functionally, catalyzes the NAD(+)-dependent oxidation of L-threonine to 2-amino-3-ketobutyrate. In Burkholderia multivorans (strain ATCC 17616 / 249), this protein is L-threonine 3-dehydrogenase.